We begin with the raw amino-acid sequence, 188 residues long: Putative 3-methyladenine DNA glycosylase (188 aa).

It belongs to the DNA glycosylase MPG family.

This Ehrlichia ruminantium (Cowdria ruminantium) protein is Putative 3-methyladenine DNA glycosylase.